The primary structure comprises 312 residues: Polyamine aminopropyltransferase (312 aa).

The 241-residue stretch at 7-247 (FFWAQEYFTP…GPLGFALAAQ (241 aa)) folds into the PABS domain. Q36 provides a ligand contact to S-methyl-5'-thioadenosine. Residues H67 and E95 each coordinate spermidine. Residues D115 and 147–148 (DA) contribute to the S-methyl-5'-thioadenosine site. The active-site Proton acceptor is the D165. S-methyl-5'-thioadenosine is bound at residue P174.

The protein belongs to the spermidine/spermine synthase family. As to quaternary structure, homodimer or homotetramer.

Its subcellular location is the cytoplasm. The enzyme catalyses S-adenosyl 3-(methylsulfanyl)propylamine + putrescine = S-methyl-5'-thioadenosine + spermidine + H(+). It participates in amine and polyamine biosynthesis; spermidine biosynthesis; spermidine from putrescine: step 1/1. In terms of biological role, catalyzes the irreversible transfer of a propylamine group from the amino donor S-adenosylmethioninamine (decarboxy-AdoMet) to putrescine (1,4-diaminobutane) to yield spermidine. This chain is Polyamine aminopropyltransferase, found in Synechococcus sp. (strain JA-3-3Ab) (Cyanobacteria bacterium Yellowstone A-Prime).